The sequence spans 299 residues: Phosphatidylserine decarboxylase proenzyme (299 aa).

Residues D90, H147, and S254 each act as charge relay system; for autoendoproteolytic cleavage activity in the active site. Residue S254 is the Schiff-base intermediate with substrate; via pyruvic acid; for decarboxylase activity of the active site. S254 carries the pyruvic acid (Ser); by autocatalysis modification.

This sequence belongs to the phosphatidylserine decarboxylase family. PSD-B subfamily. Prokaryotic type I sub-subfamily. As to quaternary structure, heterodimer of a large membrane-associated beta subunit and a small pyruvoyl-containing alpha subunit. Pyruvate serves as cofactor. In terms of processing, is synthesized initially as an inactive proenzyme. Formation of the active enzyme involves a self-maturation process in which the active site pyruvoyl group is generated from an internal serine residue via an autocatalytic post-translational modification. Two non-identical subunits are generated from the proenzyme in this reaction, and the pyruvate is formed at the N-terminus of the alpha chain, which is derived from the carboxyl end of the proenzyme. The autoendoproteolytic cleavage occurs by a canonical serine protease mechanism, in which the side chain hydroxyl group of the serine supplies its oxygen atom to form the C-terminus of the beta chain, while the remainder of the serine residue undergoes an oxidative deamination to produce ammonia and the pyruvoyl prosthetic group on the alpha chain. During this reaction, the Ser that is part of the protease active site of the proenzyme becomes the pyruvoyl prosthetic group, which constitutes an essential element of the active site of the mature decarboxylase.

It is found in the cell membrane. The catalysed reaction is a 1,2-diacyl-sn-glycero-3-phospho-L-serine + H(+) = a 1,2-diacyl-sn-glycero-3-phosphoethanolamine + CO2. The protein operates within phospholipid metabolism; phosphatidylethanolamine biosynthesis; phosphatidylethanolamine from CDP-diacylglycerol: step 2/2. Its function is as follows. Catalyzes the formation of phosphatidylethanolamine (PtdEtn) from phosphatidylserine (PtdSer). The sequence is that of Phosphatidylserine decarboxylase proenzyme from Erwinia tasmaniensis (strain DSM 17950 / CFBP 7177 / CIP 109463 / NCPPB 4357 / Et1/99).